The primary structure comprises 199 residues: uncharacterized protein (199 aa).

This is an uncharacterized protein from Treponema pallidum (strain Nichols).